Reading from the N-terminus, the 202-residue chain is Nucleoside triphosphate pyrophosphatase (202 aa).

Asp-79 serves as the catalytic Proton acceptor.

The protein belongs to the Maf family. A divalent metal cation is required as a cofactor.

The protein resides in the cytoplasm. The catalysed reaction is a ribonucleoside 5'-triphosphate + H2O = a ribonucleoside 5'-phosphate + diphosphate + H(+). It catalyses the reaction a 2'-deoxyribonucleoside 5'-triphosphate + H2O = a 2'-deoxyribonucleoside 5'-phosphate + diphosphate + H(+). Its function is as follows. Nucleoside triphosphate pyrophosphatase. May have a dual role in cell division arrest and in preventing the incorporation of modified nucleotides into cellular nucleic acids. The chain is Nucleoside triphosphate pyrophosphatase from Rhodopseudomonas palustris (strain BisB18).